Consider the following 654-residue polypeptide: Pyoverdine export ATP-binding/permease protein PvdT (654 aa).

Positions 6–245 constitute an ABC transporter domain; it reads IELCDIRKAY…AHKGIQAEEL (240 aa). 43 to 50 contacts ATP; the sequence is GASGSGKS. 4 helical membrane passes run 282-302, 529-549, 584-604, and 614-634; these read ALTL…LAVG, LSLM…IGVM, AIML…VVGA, and AFAL…GVVF.

It belongs to the ABC transporter superfamily. Macrolide exporter (TC 3.A.1.122) family. Part of the tripartite efflux system PvdRT-OpmQ, which is composed of an inner membrane component with both ATPase and permease domains, PvdT, a periplasmic membrane fusion protein, PvdR, and an outer membrane component, OpmQ.

Its subcellular location is the cell inner membrane. Has a basal ATPase activity that is stimulated by PvdR. In vitro, interaction with PVD influences the affinity of PvdT to PvdR. Part of the tripartite efflux system PvdRT-OpmQ required for the secretion into the extracellular milieu of the siderophore pyoverdine (PVD), which is involved in iron acquisition. This subunit binds PVD and drives its secretion by hydrolyzing ATP. The system is responsible for export of newly synthesized PVD after the final steps of biosynthesis have taken place in the periplasm. It is also responsible for recycling of PVD after internalization of ferri-PVD into the periplasm by the outer-membrane receptor FpvA and release of iron from PVD, thus making PVD available for new cycles of iron uptake. Contributes to resistance against ampicillin. The sequence is that of Pyoverdine export ATP-binding/permease protein PvdT from Pseudomonas putida (strain ATCC 47054 / DSM 6125 / CFBP 8728 / NCIMB 11950 / KT2440).